Consider the following 629-residue polypeptide: Protein fem-1 homolog B (629 aa).

ANK repeat units follow at residues 47–77 (QRST…DVQQ), 89–118 (DGAT…NVNH), 122–151 (TNST…NISI), 155–184 (YDNT…DPNA), 188–217 (CGAT…AMVV), and 220–250 (HGMT…DAKS). The TPR repeat unit spans residues 346–379 (SHPIIYRGAVYADNMQFEQCIKLWLHALQLRQKG). ANK repeat units lie at residues 485–529 (EGGS…NVNA) and 533–570 (MGNS…HTDM).

This sequence belongs to the fem-1 family. Component of a CRL2 E3 ubiquitin-protein ligase complex, also named ECS (Elongin BC-CUL2/5-SOCS-box protein) complex.

The protein resides in the cytoplasm. The protein localises to the nucleus. Its pathway is protein modification; protein ubiquitination. In terms of biological role, substrate-recognition component of a Cul2-RING (CRL2) E3 ubiquitin-protein ligase complex of the DesCEND (destruction via C-end degrons) pathway, which recognizes a C-degron located at the extreme C terminus of target proteins, leading to their ubiquitination and degradation. The C-degron recognized by the DesCEND pathway is usually a motif of less than ten residues and can be present in full-length proteins, truncated proteins or proteolytically cleaved forms. The CRL2(FEM1B) complex specifically recognizes proteins ending with -Gly-Leu-Asp-Arg, leading to their ubiquitination and degradation. This chain is Protein fem-1 homolog B, found in Xenopus laevis (African clawed frog).